The primary structure comprises 897 residues: 4-hydroxyphenylacetate decarboxylase glycyl radical subunit (897 aa).

The PFL domain maps to 35–770 (ESTQKLMDIY…VTLATADGRL (736 aa)). 4-hydroxyphenylacetate is bound by residues Ser344 and Cys503. The Cysteine radical intermediate role is filled by Cys503. The active-site Proton donor is the Glu505. Residues His536 and Glu637 each contribute to the 4-hydroxyphenylacetate site. Residues 778-897 (GSVSAAAGTD…EVIYRTEYDK (120 aa)) enclose the Glycine radical domain. Glycine radical is present on Gly873.

This sequence belongs to the glycyl radical enzyme (GRE) family. HPAD subfamily. Heterooctamer consisting of 4 large (HpdB) subunits and 4 small (HpdC) subunits, arranged as a tetramer of heterodimers. Also forms a catalytically inactive homodimer. Requires the activating protein CsdA to generate the key active site glycyl radical that is involved in catalysis. Post-translationally, phosphorylated on serine. Phosphorylation may trigger the formation of the active heterooctamers and thereby regulates enzyme activity.

The enzyme catalyses 4-hydroxyphenylacetate + H(+) = 4-methylphenol + CO2. It carries out the reaction 3,4-dihydroxyphenylacetate + H(+) = 4-methylcatechol + CO2. In terms of biological role, glycyl radical subunit of the HPA decarboxylase that decarboxylates phenylacetates with a hydroxyl group in the p-position. Active toward 4-hydroxyphenylacetate and 3,4-dihydroxyphenylacetate, forming 4-methylphenol and 4-methylcatechol, respectively. Is likely involved in the catabolism of aromatic amino acids such as tyrosine fermentation. 4-methylphenol (p-cresol) formation provides metabolic toxicity, which allows an active suppression of other microbes and may provide growth advantages for the producers in highly competitive environments. The large subunit is the catalytic subunit that binds the substrate. This Clostridium scatologenes protein is 4-hydroxyphenylacetate decarboxylase glycyl radical subunit.